Consider the following 63-residue polypeptide: Prokaryotic ubiquitin-like protein Pup 1 (63 aa).

Basic and acidic residues-rich tracts occupy residues 1 to 12 and 24 to 33; these read MSQEKVQRHGGG and GQERREKLGE. Positions 1–35 are disordered; that stretch reads MSQEKVQRHGGGDGEEESGPEAAGQERREKLGEDV. An ARC ATPase binding region spans residues 20 to 57; the sequence is PEAAGQERREKLGEDVDAILDEIDDVLEENAEDFVRAY. Residues 25 to 51 adopt a coiled-coil conformation; the sequence is QERREKLGEDVDAILDEIDDVLEENAE. A Deamidated glutamine modification is found at Q63. An Isoglutamyl lysine isopeptide (Gln-Lys) (interchain with K-? in acceptor proteins) cross-link involves residue Q63.

This sequence belongs to the prokaryotic ubiquitin-like protein family. Strongly interacts with the proteasome-associated ATPase ARC through a hydrophobic interface; the interacting region of Pup lies in its C-terminal half. There is one Pup binding site per ARC hexamer ring. In terms of processing, is modified by deamidation of its C-terminal glutamine to glutamate by the deamidase Dop, a prerequisite to the subsequent pupylation process.

It functions in the pathway protein degradation; proteasomal Pup-dependent pathway. In terms of biological role, protein modifier that is covalently attached to lysine residues of substrate proteins, thereby targeting them for proteasomal degradation. The tagging system is termed pupylation. This chain is Prokaryotic ubiquitin-like protein Pup 1, found in Saccharopolyspora erythraea (strain ATCC 11635 / DSM 40517 / JCM 4748 / NBRC 13426 / NCIMB 8594 / NRRL 2338).